Consider the following 196-residue polypeptide: ATP-dependent Clp protease proteolytic subunit 1 (196 aa).

Ser-96 functions as the Nucleophile in the catalytic mechanism. His-121 is an active-site residue.

It belongs to the peptidase S14 family. As to quaternary structure, fourteen ClpP subunits assemble into 2 heptameric rings which stack back to back to give a disk-like structure with a central cavity, resembling the structure of eukaryotic proteasomes.

Its subcellular location is the cytoplasm. The enzyme catalyses Hydrolysis of proteins to small peptides in the presence of ATP and magnesium. alpha-casein is the usual test substrate. In the absence of ATP, only oligopeptides shorter than five residues are hydrolyzed (such as succinyl-Leu-Tyr-|-NHMec, and Leu-Tyr-Leu-|-Tyr-Trp, in which cleavage of the -Tyr-|-Leu- and -Tyr-|-Trp bonds also occurs).. In terms of biological role, cleaves peptides in various proteins in a process that requires ATP hydrolysis. Has a chymotrypsin-like activity. Plays a major role in the degradation of misfolded proteins. The sequence is that of ATP-dependent Clp protease proteolytic subunit 1 from Prochlorococcus marinus subsp. pastoris (strain CCMP1986 / NIES-2087 / MED4).